Reading from the N-terminus, the 766-residue chain is General transcription and DNA repair factor IIH helicase/translocase subunit XPB2 (766 aa).

Residues Met-1 to Glu-56 form a disordered region. The segment covering Asp-31–Arg-41 has biased composition (acidic residues). The span at Asp-42 to Glu-56 shows a compositional bias: basic and acidic residues. The region spanning Met-293–Leu-455 is the Helicase ATP-binding domain. Residue Leu-306–Ser-313 coordinates ATP. The DEVH box motif lies at Asp-408–His-411. One can recognise a Helicase C-terminal domain in the interval Arg-510–Ser-676. Polar residues predominate over residues Ser-739–Ser-748. The disordered stretch occupies residues Ser-739–Val-766. The Nuclear localization signal motif lies at Lys-749–Tyr-765. Basic residues predominate over residues Arg-757–Val-766.

It belongs to the helicase family. RAD25/XPB subfamily. Component of the 7-subunit TFIIH core complex composed of XPB, XPD, TFB1/GTF2H1, GTF2H2/P44, TFB4/GTF2H3, TFB2/GTF2H4 and TFB5/GTF2H5, which is active in NER. The core complex associates with the 3-subunit CDK-activating kinase (CAK) module composed of CYCH1/cyclin H1, CDKD and MAT1/At4g30820 to form the 10-subunit holoenzyme (holo-TFIIH) active in transcription. As to expression, expressed ubiquitously.

It is found in the nucleus. The enzyme catalyses Couples ATP hydrolysis with the unwinding of duplex DNA by translocating in the 3'-5' direction.. It catalyses the reaction ATP + H2O = ADP + phosphate + H(+). Its function is as follows. ATP-dependent 3'-5' DNA helicase/translocase; binds dsDNA rather than ssDNA, unzipping it in a translocase rather than classical helicase activity. Component of the general transcription and DNA repair factor IIH (TFIIH) core complex. When complexed to CDK-activating kinase (CAK), involved in RNA transcription by RNA polymerase II. The ATPase activity of XPB/ERCC3, but not its helicase activity, is required for DNA opening; it may wrap around the damaged DNA wedging it open, causing localized melting and twisting that allows XPD/ERCC2 helicase to anchor. The ATP-dependent helicase activity of XPB/ERCC3 may be required for promoter escape. Also involved in transcription-coupled nucleotide excision repair (NER) of damaged DNA. In NER, TFIIH acts by opening DNA around the lesion to allow the excision of the damaged oligonucleotide and its replacement by a new DNA fragment. The structure of the TFIIH transcription complex differs from the NER-TFIIH complex. Partially complements UV sensitivity of a yeast SSL2 mutation. This is General transcription and DNA repair factor IIH helicase/translocase subunit XPB2 (XPB2) from Arabidopsis thaliana (Mouse-ear cress).